The chain runs to 636 residues: Zinc finger protein 90 (636 aa).

In terms of domain architecture, KRAB spans 14–85 (VTFKDVAVNF…EKEIQRPFCP (72 aa)). 7 C2H2-type zinc fingers span residues 208-230 (YKCD…EKIH), 250-272 (HECA…QRIH), 278-300 (FECN…ENAH), 306-328 (YQCS…QRIH), 334-356 (YRCN…EVTH), 362-384 (FQCK…ERTH), and 390-412 (FECS…MRIH). Residues 227-247 (EKIHKGDPYSNGTDQGAQSGR) form a disordered region. Lys-444 participates in a covalent cross-link: Glycyl lysine isopeptide (Lys-Gly) (interchain with G-Cter in SUMO2). 6 C2H2-type zinc fingers span residues 446–468 (YHCN…QRLH), 494–516 (YQCN…HRIH), 522–544 (YECN…ERTH), 550–572 (YECI…ERTH), 578–600 (YECN…QRTH), and 606–628 (YACK…HRVH).

This sequence belongs to the krueppel C2H2-type zinc-finger protein family. In terms of assembly, interacts (via N- and C-termini) with REST (via zinc-finger DNA-binding domain); the interaction inhibits REST repressor activity. As to expression, brain, spleen, thymus, and testis. Expressed in heart.

The protein localises to the nucleus. Its function is as follows. Inhibits the transcriptional repressor activity of REST by inhibiting its binding to DNA, thereby derepressing transcription of REST target genes. In Mus musculus (Mouse), this protein is Zinc finger protein 90 (Zfp90).